Here is a 285-residue protein sequence, read N- to C-terminus: Shikimate dehydrogenase (NADP(+)) (285 aa).

Shikimate-binding positions include 20–22 (SIS) and S67. K71 acts as the Proton acceptor in catalysis. Shikimate contacts are provided by N92 and D107. NADP(+) contacts are provided by residues 129 to 133 (GAGGA) and I227. Residue Y229 participates in shikimate binding. G250 is an NADP(+) binding site.

This sequence belongs to the shikimate dehydrogenase family. In terms of assembly, homodimer.

The catalysed reaction is shikimate + NADP(+) = 3-dehydroshikimate + NADPH + H(+). It functions in the pathway metabolic intermediate biosynthesis; chorismate biosynthesis; chorismate from D-erythrose 4-phosphate and phosphoenolpyruvate: step 4/7. Involved in the biosynthesis of the chorismate, which leads to the biosynthesis of aromatic amino acids. Catalyzes the reversible NADPH linked reduction of 3-dehydroshikimate (DHSA) to yield shikimate (SA). This is Shikimate dehydrogenase (NADP(+)) from Streptococcus thermophilus (strain ATCC BAA-491 / LMD-9).